An 802-amino-acid polypeptide reads, in one-letter code: Acetyl-CoA decarbonylase/synthase complex subunit alpha 1 (802 aa).

[4Fe-4S] cluster contacts are provided by Cys-68, Cys-71, Cys-76, and Cys-86. CO is bound at residue His-109. 3 residues coordinate [Ni-4Fe-4S] cluster: His-243, Cys-271, and Cys-310. 4Fe-4S ferredoxin-type domains follow at residues 395–424 and 435–464; these read DEAL…VDQG and SKLA…INVI. Positions 405, 408, 411, 415, 444, 447, 450, and 454 each coordinate [4Fe-4S] cluster. 3 residues coordinate [Ni-4Fe-4S] cluster: Cys-512, Cys-541, and Cys-576.

Belongs to the Ni-containing carbon monoxide dehydrogenase family. In terms of assembly, heterotetramer of two alpha and two epsilon subunits. The ACDS complex is made up of alpha, epsilon, beta, gamma and delta subunits with a probable stoichiometry of (alpha(2)epsilon(2))(4)-beta(8)-(gamma(1)delta(1))(8). [4Fe-4S] cluster serves as cofactor. It depends on [Ni-4Fe-4S] cluster as a cofactor.

It catalyses the reaction CO + 2 oxidized [2Fe-2S]-[ferredoxin] + H2O = 2 reduced [2Fe-2S]-[ferredoxin] + CO2 + 2 H(+). In terms of biological role, part of the ACDS complex that catalyzes the reversible cleavage of acetyl-CoA, allowing autotrophic growth from CO(2). The alpha-epsilon subcomponent functions as a carbon monoxide dehydrogenase. The chain is Acetyl-CoA decarbonylase/synthase complex subunit alpha 1 from Archaeoglobus fulgidus (strain ATCC 49558 / DSM 4304 / JCM 9628 / NBRC 100126 / VC-16).